Consider the following 217-residue polypeptide: Large ribosomal subunit protein uL3 (217 aa).

It belongs to the universal ribosomal protein uL3 family. Part of the 50S ribosomal subunit. Forms a cluster with proteins L14 and L19.

Functionally, one of the primary rRNA binding proteins, it binds directly near the 3'-end of the 23S rRNA, where it nucleates assembly of the 50S subunit. This chain is Large ribosomal subunit protein uL3, found in Brachyspira hyodysenteriae (strain ATCC 49526 / WA1).